The following is a 397-amino-acid chain: Tryptophan synthase beta chain (397 aa).

K88 is modified (N6-(pyridoxal phosphate)lysine).

This sequence belongs to the TrpB family. As to quaternary structure, tetramer of two alpha and two beta chains. The cofactor is pyridoxal 5'-phosphate.

It carries out the reaction (1S,2R)-1-C-(indol-3-yl)glycerol 3-phosphate + L-serine = D-glyceraldehyde 3-phosphate + L-tryptophan + H2O. The protein operates within amino-acid biosynthesis; L-tryptophan biosynthesis; L-tryptophan from chorismate: step 5/5. Its function is as follows. The beta subunit is responsible for the synthesis of L-tryptophan from indole and L-serine. The protein is Tryptophan synthase beta chain of Haemophilus influenzae (strain PittEE).